A 60-amino-acid chain; its full sequence is MDPCDCSKSGTCNCGGSCTCTNCSCTSCKKSCCPCCPSGCTKCASGCVCKGKTCDTSCCQ.

The interval Met-1 to Cys-28 is beta. Residues Cys-4, Cys-6, Cys-12, Cys-14, Cys-18, Cys-20, Cys-23, Cys-25, Cys-28, Cys-32, Cys-33, Cys-35, Cys-36, Cys-40, Cys-43, Cys-47, Cys-49, Cys-54, Cys-58, and Cys-59 each contribute to the a divalent metal cation site. Residues Lys-29–Gln-60 form an alpha region.

Belongs to the metallothionein superfamily. Type 1 family.

Metallothioneins have a high content of cysteine residues that bind various heavy metals. The sequence is that of Metallothionein B (mtb) from Chionodraco hamatus (Antarctic teleost icefish).